A 315-amino-acid chain; its full sequence is MGFMIEHWDFSTPMATQETTTAEHIQPNHWYHCERLHPDIRSWLEDNHVPRATVDHLLADESRPSFHPLDDDNFMLILRGINMNENASPEDMLSIRILYFQGALISTRKIPSRAIMEIRQALAEHKGPKSLASLLNQIIEGLNGKIDLYLDTIEETLNEFDVNDESTYNHIAAQKALISIKRFIRPQQYAIRDLIESESELVTSRPHQYRFAHNNITRINETIEFYLGEVALFQDEIKHNRDEKTNKNSYLFTLVATIFLPTSFLTGLLGINIGGMPGVESSMAFTWFCIALIVIFGLEWLLFKRLGFTNKTDDE.

Topologically, residues 1 to 250 are cytoplasmic; the sequence is MGFMIEHWDF…RDEKTNKNSY (250 aa). Residues 251-271 traverse the membrane as a helical segment; it reads LFTLVATIFLPTSFLTGLLGI. At 272–282 the chain is on the periplasmic side; that stretch reads NIGGMPGVESS. Residues 283-303 traverse the membrane as a helical segment; the sequence is MAFTWFCIALIVIFGLEWLLF. Residues 304–315 are Cytoplasmic-facing; the sequence is KRLGFTNKTDDE.

It belongs to the CorA metal ion transporter (MIT) (TC 1.A.35) family. In terms of assembly, homopentamer. Can assemble pentamers in the absence of the transmembrane regions.

It is found in the cell inner membrane. It carries out the reaction Zn(2+)(out) + H(+)(out) = Zn(2+)(in) + H(+)(in). Zinc transporter. Acts as a Zn(2+):proton symporter, which likely mediates zinc ion uptake. The polypeptide is Zinc transport protein ZntB (Vibrio parahaemolyticus serotype O3:K6 (strain RIMD 2210633)).